A 332-amino-acid chain; its full sequence is Mitochondrial glycine transporter (332 aa).

3 Solcar repeats span residues 11–94, 121–205, and 235–319; these read SSSY…LRQN, LSNL…LKKR, and TSAS…LIRR. The next 6 helical transmembrane spans lie at 17–42, 69–95, 127–152, 180–203, 239–265, and 294–312; these read FGAG…TRVQ, GTVP…RQNV, LTTG…VRYE, GFGA…EELK, INFG…KTRI, and GLGL…AWTI.

Belongs to the mitochondrial carrier (TC 2.A.29) family. SLC25A38 subfamily.

It localises to the mitochondrion inner membrane. The enzyme catalyses glycine(in) = glycine(out). Functionally, mitochondrial glycine transporter that imports glycine into the mitochondrial matrix. Plays an important role in providing glycine for the first enzymatic step in heme biosynthesis, the condensation of glycine with succinyl-CoA to produce 5-aminolevulinate (ALA) in the mitochondrial matrix. This is Mitochondrial glycine transporter from Botryotinia fuckeliana (strain B05.10) (Noble rot fungus).